The primary structure comprises 296 residues: Diaminopimelate epimerase (296 aa).

Residues asparagine 17, glutamine 49, and asparagine 69 each coordinate substrate. Catalysis depends on cysteine 78, which acts as the Proton donor. Substrate contacts are provided by residues 79–80 (GN), asparagine 171, asparagine 205, and 223–224 (ER). Cysteine 232 acts as the Proton acceptor in catalysis. 233–234 (GT) contributes to the substrate binding site.

It belongs to the diaminopimelate epimerase family. As to quaternary structure, homodimer.

It localises to the cytoplasm. It catalyses the reaction (2S,6S)-2,6-diaminopimelate = meso-2,6-diaminopimelate. It functions in the pathway amino-acid biosynthesis; L-lysine biosynthesis via DAP pathway; DL-2,6-diaminopimelate from LL-2,6-diaminopimelate: step 1/1. Its function is as follows. Catalyzes the stereoinversion of LL-2,6-diaminopimelate (L,L-DAP) to meso-diaminopimelate (meso-DAP), a precursor of L-lysine and an essential component of the bacterial peptidoglycan. The chain is Diaminopimelate epimerase from Methylorubrum extorquens (strain CM4 / NCIMB 13688) (Methylobacterium extorquens).